The chain runs to 265 residues: MISGEQTPTQYIQHHLQNWTVGEGFWAVNVDTIFWSVLLGVLFLWSFRRVAKKSSAGVPGKWQCFVEMIVEFVDNSVKESFHGKDKLIAPLALTIFVWIFLMNLMDLIPVDWLPTAAMYGGYWLGFVEDPHDVYMKVVPTTDLNTTFALSLSVFALIIIYSIKYKGVKGFAKEMTFTPFNHWALIPVNFVLESITLLAKPASLALRLFGNMYAGELIFILIAMIGFWQLPAHFAWAVFHILVITLQAFIFMMLTIVYLSMASSEH.

5 consecutive transmembrane segments (helical) span residues 25-45, 88-108, 142-162, 207-227, and 233-253; these read FWAV…LFLW, IAPL…MDLI, DLNT…IYSI, LFGN…IGFW, and FAWA…FMML.

It belongs to the ATPase A chain family. In terms of assembly, F-type ATPases have 2 components, CF(1) - the catalytic core - and CF(0) - the membrane proton channel. CF(1) has five subunits: alpha(3), beta(3), gamma(1), delta(1), epsilon(1). CF(0) has three main subunits: a(1), b(2) and c(9-12). The alpha and beta chains form an alternating ring which encloses part of the gamma chain. CF(1) is attached to CF(0) by a central stalk formed by the gamma and epsilon chains, while a peripheral stalk is formed by the delta and b chains.

Its subcellular location is the cell inner membrane. Functionally, key component of the proton channel; it plays a direct role in the translocation of protons across the membrane. The sequence is that of ATP synthase subunit a from Idiomarina loihiensis (strain ATCC BAA-735 / DSM 15497 / L2-TR).